The primary structure comprises 362 residues: Dihydroorotate dehydrogenase (quinone) (362 aa).

FMN is bound by residues 62-66 and T86; that span reads AGYDK. A substrate-binding site is contributed by K66. 111–115 is a substrate binding site; it reads NRLGF. FMN is bound by residues N139 and N170. N170 is a substrate binding site. S173 serves as the catalytic Nucleophile. N175 provides a ligand contact to substrate. FMN contacts are provided by K215 and S243. 244 to 245 contacts substrate; it reads NT. FMN is bound by residues G266, G295, and 316-317; that span reads YS.

Belongs to the dihydroorotate dehydrogenase family. Type 2 subfamily. Monomer. Requires FMN as cofactor.

Its subcellular location is the cell membrane. It carries out the reaction (S)-dihydroorotate + a quinone = orotate + a quinol. Its pathway is pyrimidine metabolism; UMP biosynthesis via de novo pathway; orotate from (S)-dihydroorotate (quinone route): step 1/1. Catalyzes the conversion of dihydroorotate to orotate with quinone as electron acceptor. This is Dihydroorotate dehydrogenase (quinone) from Sinorhizobium fredii (strain NBRC 101917 / NGR234).